The chain runs to 311 residues: Methionyl-tRNA formyltransferase (311 aa).

A (6S)-5,6,7,8-tetrahydrofolate-binding site is contributed by 110-113; that stretch reads SLLP.

It belongs to the Fmt family.

It catalyses the reaction L-methionyl-tRNA(fMet) + (6R)-10-formyltetrahydrofolate = N-formyl-L-methionyl-tRNA(fMet) + (6S)-5,6,7,8-tetrahydrofolate + H(+). Its function is as follows. Attaches a formyl group to the free amino group of methionyl-tRNA(fMet). The formyl group appears to play a dual role in the initiator identity of N-formylmethionyl-tRNA by promoting its recognition by IF2 and preventing the misappropriation of this tRNA by the elongation apparatus. In Streptococcus pyogenes serotype M18 (strain MGAS8232), this protein is Methionyl-tRNA formyltransferase.